The following is a 287-amino-acid chain: Ribosomal RNA-processing protein 8 (287 aa).

The tract at residues 1 to 62 is disordered; the sequence is MTTEENKTSR…SAPSKRPKPS (62 aa). Over residues 9–21 the composition is skewed to basic residues; the sequence is SRNRKRKRQRNPK. Residues 35–46 show a composition bias toward basic and acidic residues; that stretch reads QNEKKNQRDTKN. The S-adenosyl-L-methionine site is built by His107, Gly142, Asp160, Asp172, Met173, and Cys189.

It belongs to the methyltransferase superfamily. RRP8 family.

Its subcellular location is the nucleus. It is found in the nucleolus. Its function is as follows. Probable methyltransferase required to silence rDNA. The sequence is that of Ribosomal RNA-processing protein 8 from Arabidopsis thaliana (Mouse-ear cress).